The chain runs to 122 residues: Large ribosomal subunit protein uL14 (122 aa).

The protein belongs to the universal ribosomal protein uL14 family. In terms of assembly, part of the 50S ribosomal subunit. Forms a cluster with proteins L3 and L19. In the 70S ribosome, L14 and L19 interact and together make contacts with the 16S rRNA in bridges B5 and B8.

In terms of biological role, binds to 23S rRNA. Forms part of two intersubunit bridges in the 70S ribosome. This chain is Large ribosomal subunit protein uL14, found in Elusimicrobium minutum (strain Pei191).